The sequence spans 141 residues: Large ribosomal subunit protein uL11 (141 aa).

It belongs to the universal ribosomal protein uL11 family. As to quaternary structure, part of the ribosomal stalk of the 50S ribosomal subunit. Interacts with L10 and the large rRNA to form the base of the stalk. L10 forms an elongated spine to which L12 dimers bind in a sequential fashion forming a multimeric L10(L12)X complex. In terms of processing, one or more lysine residues are methylated.

In terms of biological role, forms part of the ribosomal stalk which helps the ribosome interact with GTP-bound translation factors. The chain is Large ribosomal subunit protein uL11 from Synechococcus sp. (strain CC9605).